The chain runs to 388 residues: Chorismate synthase (388 aa).

NADP(+) contacts are provided by Arg39 and Arg45. Residues 132–134, 251–252, Gly296, 311–315, and Arg337 each bind FMN; these read RSS, NA, and KPIPT.

The protein belongs to the chorismate synthase family. In terms of assembly, homotetramer. FMNH2 serves as cofactor.

It carries out the reaction 5-O-(1-carboxyvinyl)-3-phosphoshikimate = chorismate + phosphate. It participates in metabolic intermediate biosynthesis; chorismate biosynthesis; chorismate from D-erythrose 4-phosphate and phosphoenolpyruvate: step 7/7. Catalyzes the anti-1,4-elimination of the C-3 phosphate and the C-6 proR hydrogen from 5-enolpyruvylshikimate-3-phosphate (EPSP) to yield chorismate, which is the branch point compound that serves as the starting substrate for the three terminal pathways of aromatic amino acid biosynthesis. This reaction introduces a second double bond into the aromatic ring system. The sequence is that of Chorismate synthase from Staphylococcus aureus (strain COL).